A 151-amino-acid polypeptide reads, in one-letter code: Ribosome-binding factor A (151 aa).

A disordered region spans residues 116–151 (DAEVARAAANARPAGDPDPYREPRPADDDDEDDEDE). Residues 120–129 (ARAAANARPA) show a composition bias toward low complexity. Residues 142-151 (DDDDEDDEDE) are compositionally biased toward acidic residues.

Belongs to the RbfA family. Monomer. Binds 30S ribosomal subunits, but not 50S ribosomal subunits or 70S ribosomes.

The protein localises to the cytoplasm. Functionally, one of several proteins that assist in the late maturation steps of the functional core of the 30S ribosomal subunit. Associates with free 30S ribosomal subunits (but not with 30S subunits that are part of 70S ribosomes or polysomes). Required for efficient processing of 16S rRNA. May interact with the 5'-terminal helix region of 16S rRNA. The protein is Ribosome-binding factor A of Thermobifida fusca (strain YX).